The sequence spans 96 residues: CRISPR-associated endoribonuclease Cas2 (96 aa).

Aspartate 8 contributes to the Mg(2+) binding site.

This sequence belongs to the CRISPR-associated endoribonuclease Cas2 protein family. As to quaternary structure, homodimer, forms a heterotetramer with a Cas1 homodimer. It depends on Mg(2+) as a cofactor.

In terms of biological role, CRISPR (clustered regularly interspaced short palindromic repeat), is an adaptive immune system that provides protection against mobile genetic elements (viruses, transposable elements and conjugative plasmids). CRISPR clusters contain sequences complementary to antecedent mobile elements and target invading nucleic acids. CRISPR clusters are transcribed and processed into CRISPR RNA (crRNA). Functions as a ssRNA-specific endoribonuclease. Involved in the integration of spacer DNA into the CRISPR cassette. The chain is CRISPR-associated endoribonuclease Cas2 from Chlorobaculum tepidum (strain ATCC 49652 / DSM 12025 / NBRC 103806 / TLS) (Chlorobium tepidum).